Consider the following 237-residue polypeptide: Phosphoribosylaminoimidazole-succinocarboxamide synthase (237 aa).

This sequence belongs to the SAICAR synthetase family.

It carries out the reaction 5-amino-1-(5-phospho-D-ribosyl)imidazole-4-carboxylate + L-aspartate + ATP = (2S)-2-[5-amino-1-(5-phospho-beta-D-ribosyl)imidazole-4-carboxamido]succinate + ADP + phosphate + 2 H(+). The protein operates within purine metabolism; IMP biosynthesis via de novo pathway; 5-amino-1-(5-phospho-D-ribosyl)imidazole-4-carboxamide from 5-amino-1-(5-phospho-D-ribosyl)imidazole-4-carboxylate: step 1/2. This is Phosphoribosylaminoimidazole-succinocarboxamide synthase from Listeria monocytogenes serovar 1/2a (strain ATCC BAA-679 / EGD-e).